Here is a 501-residue protein sequence, read N- to C-terminus: Dipeptide and tripeptide permease A (501 aa).

Over 1 to 34 the chain is Cytoplasmic; sequence MSTANNKPTESVSLNAFKQPKSFYLIFSIELWER. A helical transmembrane segment spans residues 35–55; it reads FGYYGLQGIMAVYLVKQLGMS. At 56–59 the chain is on the periplasmic side; sequence EADS. A helical membrane pass occupies residues 60–80; that stretch reads ITLFSSFSALVYGLVAIGGWL. Topologically, residues 81-89 are cytoplasmic; sequence GDKVLGTKR. Residues 90-110 traverse the membrane as a helical segment; it reads VIMLGAIVLAIGYGLVAWSGH. Aspartate 111 is a topological domain (periplasmic). Residues 112-132 traverse the membrane as a helical segment; the sequence is VAIVYMGMATIAVGNGLFKAN. At 133–153 the chain is on the cytoplasmic side; sequence PSSLLSTCYAKDDPRLDGAFT. Residues 154–174 traverse the membrane as a helical segment; sequence MYYMSINIGSFFSMLATPWLA. The Periplasmic portion of the chain corresponds to 175–178; it reads AKFG. The helical transmembrane segment at 179-199 threads the bilayer; the sequence is WSVAFALSFVGMLITVVNFLF. Residues 200-217 are Cytoplasmic-facing; that stretch reads CRSWVKDYGSKPDFEAVH. The helical transmembrane segment at 218-238 threads the bilayer; that stretch reads FGKLLATIAGVIVLIAIATWL. The Periplasmic segment spans residues 239–246; it reads LHNQGIAR. Residues 247–267 traverse the membrane as a helical segment; sequence MVLGVIALGIVIIFGKEAFAM. Topologically, residues 268–274 are cytoplasmic; it reads QGAARRK. The chain crosses the membrane as a helical span at residues 275-295; sequence MIVAFILMLEAIIFFVLYSQM. Residues 296–320 lie on the Periplasmic side of the membrane; that stretch reads PTSLNFFAIRNVEHTILGIAVEPEQ. A helical transmembrane segment spans residues 321–341; it reads YQALNPFWIIIGSPILAAIYN. Topologically, residues 342 to 352 are cytoplasmic; it reads KMGDTLPMPTK. Residues 353 to 373 form a helical membrane-spanning segment; that stretch reads FAIGMVLCSGAFLVLPLGAKF. Residues 374-383 lie on the Periplasmic side of the membrane; sequence ATDAGIVSVN. Residues 384–404 form a helical membrane-spanning segment; it reads WLILSYGLQSIGELMISGLGL. Residues 405-414 are Cytoplasmic-facing; the sequence is AMVAQLVPQR. The helical transmembrane segment at 415-435 threads the bilayer; it reads LMGFIMGSWFLTTAGANLIGG. The Periplasmic portion of the chain corresponds to 436–459; the sequence is YVAGMMAVPENVTDPLMSLEVYGR. Residues 460–480 traverse the membrane as a helical segment; sequence VFLQIGVATAVIAALMLITAP. The Cytoplasmic portion of the chain corresponds to 481–501; that stretch reads KLNRMTQDDEENAKAAKTATA.

The protein belongs to the major facilitator superfamily. Proton-dependent oligopeptide transporter (POT/PTR) (TC 2.A.17) family. DtpA subfamily.

It is found in the cell inner membrane. Functionally, proton-dependent permease that transports di- and tripeptides. This is Dipeptide and tripeptide permease A from Citrobacter koseri (strain ATCC BAA-895 / CDC 4225-83 / SGSC4696).